Reading from the N-terminus, the 670-residue chain is CLK4-associating serine/arginine rich protein (670 aa).

The residue at position 101 (Ser-101) is a Phosphoserine. 2 disordered regions span residues 171-232 (TVAE…GMAD) and 258-670 (EKAM…HYRH). Over residues 182–214 (PEEEESPAEEESNSDEDEVIPDIDVEVDVDELN) the composition is skewed to acidic residues. Positions 265 to 283 (RRSRRQRREFREKRLRGRK) are enriched in basic residues. Phosphoserine occurs at positions 285 and 294. Basic and acidic residues predominate over residues 290 to 313 (ARRDSPTYDPYKRSPSESSSESRS). Residue Thr-327 is modified to Phosphothreonine. Ser-331 and Ser-335 each carry phosphoserine. Low complexity predominate over residues 340-355 (AAAAAAAAASGAATGK). Positions 356 to 365 (PPAPPQPGGP) are enriched in pro residues. Positions 378–400 (STSSSSSSASRTSSSRSRSSSSS) are enriched in low complexity. Basic residues-rich tracts occupy residues 411–443 (SGRHARSRSRSWSRSRSRSRRYSRSRSRGRRHS) and 481–491 (RGGRGPRHHSS). A compositionally biased stretch (low complexity) spans 492–529 (SRSSWSLSPSRSRSLTRSRSPSLSRSRSLSRSRSQSHS). At Ser-543 the chain carries Phosphoserine. Thr-569 bears the Phosphothreonine mark. Residues 581–643 (ALNRQFKADK…ERQYSRQSRS (63 aa)) adopt a coiled-coil conformation. 2 stretches are compositionally biased toward basic and acidic residues: residues 586-613 (FKADKKAAQEKMIQQEHERQEREDELRA) and 621-637 (KERERREKEREEWERQY). Over residues 638-647 (SRQSRSPSPR) the composition is skewed to low complexity. Basic residues predominate over residues 655–670 (SRRRSRSRSRSPHYRH).

Belongs to the splicing factor SR family. As to quaternary structure, probably interacts with CLK4. Post-translationally, phosphorylated in vitro by CLK4.

It is found in the nucleus. Its function is as follows. Probably functions as an alternative splicing regulator. May regulate the mRNA splicing of genes such as CLK1. May act by regulating members of the CLK kinase family. The sequence is that of CLK4-associating serine/arginine rich protein (CLASRP) from Bos taurus (Bovine).